Reading from the N-terminus, the 715-residue chain is 1,4-alpha-glucan branching enzyme GlgB (715 aa).

Asp396 serves as the catalytic Nucleophile. Glu449 (proton donor) is an active-site residue.

The protein belongs to the glycosyl hydrolase 13 family. GlgB subfamily. Monomer.

The catalysed reaction is Transfers a segment of a (1-&gt;4)-alpha-D-glucan chain to a primary hydroxy group in a similar glucan chain.. It functions in the pathway glycan biosynthesis; glycogen biosynthesis. In terms of biological role, catalyzes the formation of the alpha-1,6-glucosidic linkages in glycogen by scission of a 1,4-alpha-linked oligosaccharide from growing alpha-1,4-glucan chains and the subsequent attachment of the oligosaccharide to the alpha-1,6 position. The sequence is that of 1,4-alpha-glucan branching enzyme GlgB from Aliivibrio fischeri (strain ATCC 700601 / ES114) (Vibrio fischeri).